The following is a 184-amino-acid chain: GTP cyclohydrolase 1 (184 aa).

The Zn(2+) site is built by C75, H78, and C146.

It belongs to the GTP cyclohydrolase I family. As to quaternary structure, homomer.

It carries out the reaction GTP + H2O = 7,8-dihydroneopterin 3'-triphosphate + formate + H(+). It functions in the pathway cofactor biosynthesis; 7,8-dihydroneopterin triphosphate biosynthesis; 7,8-dihydroneopterin triphosphate from GTP: step 1/1. The sequence is that of GTP cyclohydrolase 1 from Streptococcus pneumoniae (strain Hungary19A-6).